The primary structure comprises 157 residues: Protein Smg homolog (157 aa).

It belongs to the Smg family.

The sequence is that of Protein Smg homolog from Xylella fastidiosa (strain M23).